The sequence spans 1052 residues: Mediator of RNA polymerase II transcription subunit 5 (1052 aa).

Residues Gly-949 to Asn-982 form a disordered region. A compositionally biased stretch (low complexity) spans Gln-959 to Gln-970.

This sequence belongs to the Mediator complex subunit 5 family. In terms of assembly, component of the Mediator complex.

The protein localises to the nucleus. Its function is as follows. Component of the Mediator complex, a coactivator involved in the regulated transcription of nearly all RNA polymerase II-dependent genes. Mediator functions as a bridge to convey information from gene-specific regulatory proteins to the basal RNA polymerase II transcription machinery. Mediator is recruited to promoters by direct interactions with regulatory proteins and serves as a scaffold for the assembly of a functional preinitiation complex with RNA polymerase II and the general transcription factors. The protein is Mediator of RNA polymerase II transcription subunit 5 (NUT1) of Coccidioides immitis (strain RS) (Valley fever fungus).